The chain runs to 333 residues: Flagellar P-ring protein (333 aa).

The first 22 residues, 1–22, serve as a signal peptide directing secretion; it reads MRRNILSMFLFITLIIYSSIFA.

The protein belongs to the FlgI family. In terms of assembly, the basal body constitutes a major portion of the flagellar organelle and consists of four rings (L,P,S, and M) mounted on a central rod.

It localises to the periplasm. The protein localises to the bacterial flagellum basal body. In terms of biological role, assembles around the rod to form the L-ring and probably protects the motor/basal body from shearing forces during rotation. In Fervidobacterium nodosum (strain ATCC 35602 / DSM 5306 / Rt17-B1), this protein is Flagellar P-ring protein.